The following is a 450-amino-acid chain: Tubulin alpha-1 chain (450 aa).

Residues Q11, E71, G144, T145, T179, N206, and N228 each contribute to the GTP site. Residue E71 participates in Mg(2+) binding. The active site involves E254.

This sequence belongs to the tubulin family. Dimer of alpha and beta chains. A typical microtubule is a hollow water-filled tube with an outer diameter of 25 nm and an inner diameter of 15 nM. Alpha-beta heterodimers associate head-to-tail to form protofilaments running lengthwise along the microtubule wall with the beta-tubulin subunit facing the microtubule plus end conferring a structural polarity. Microtubules usually have 13 protofilaments but different protofilament numbers can be found in some organisms and specialized cells. The cofactor is Mg(2+). In terms of processing, undergoes a tyrosination/detyrosination cycle, the cyclic removal and re-addition of a C-terminal tyrosine residue by the enzymes tubulin tyrosine carboxypeptidase (TTCP) and tubulin tyrosine ligase (TTL), respectively.

It localises to the cytoplasm. The protein resides in the cytoskeleton. The enzyme catalyses GTP + H2O = GDP + phosphate + H(+). Its function is as follows. Tubulin is the major constituent of microtubules, a cylinder consisting of laterally associated linear protofilaments composed of alpha- and beta-tubulin heterodimers. Microtubules grow by the addition of GTP-tubulin dimers to the microtubule end, where a stabilizing cap forms. Below the cap, tubulin dimers are in GDP-bound state, owing to GTPase activity of alpha-tubulin. This is Tubulin alpha-1 chain (TUBA1) from Oryza sativa subsp. japonica (Rice).